The sequence spans 156 residues: Small ribosomal subunit protein bS6 (156 aa).

The segment at 98 to 156 is disordered; sequence GHDFRDQRSHHGQAGEFRKREPQQKSKEQSEFSKEKKSFSKSVTKKTVVSKPKETKEEK. Residues 113–135 are compositionally biased toward basic and acidic residues; that stretch reads EFRKREPQQKSKEQSEFSKEKKS. The span at 137–147 shows a compositional bias: low complexity; that stretch reads SKSVTKKTVVS.

It belongs to the bacterial ribosomal protein bS6 family.

Functionally, binds together with bS18 to 16S ribosomal RNA. The sequence is that of Small ribosomal subunit protein bS6 from Mycoplasmopsis synoviae (strain 53) (Mycoplasma synoviae).